The chain runs to 243 residues: 2-C-methyl-D-erythritol 4-phosphate cytidylyltransferase (243 aa).

It belongs to the IspD/TarI cytidylyltransferase family. IspD subfamily.

It catalyses the reaction 2-C-methyl-D-erythritol 4-phosphate + CTP + H(+) = 4-CDP-2-C-methyl-D-erythritol + diphosphate. The protein operates within isoprenoid biosynthesis; isopentenyl diphosphate biosynthesis via DXP pathway; isopentenyl diphosphate from 1-deoxy-D-xylulose 5-phosphate: step 2/6. In terms of biological role, catalyzes the formation of 4-diphosphocytidyl-2-C-methyl-D-erythritol from CTP and 2-C-methyl-D-erythritol 4-phosphate (MEP). In Rhodopirellula baltica (strain DSM 10527 / NCIMB 13988 / SH1), this protein is 2-C-methyl-D-erythritol 4-phosphate cytidylyltransferase.